Consider the following 722-residue polypeptide: Zinc finger BED domain-containing protein RICESLEEPER 1 (722 aa).

The segment at 66-126 (RKKSLVWEHF…GSCPKIKNQE (61 aa)) adopts a BED-type zinc-finger fold. The Zn(2+) site is built by cysteine 89, cysteine 92, histidine 113, and cysteine 119. Residues 572-592 (VEQGGGNNAPASENSTQATAP) are disordered. Polar residues predominate over residues 580-592 (APASENSTQATAP). Residues 617–702 (ELEQYLDESL…EALVCAKDWL (86 aa)) are HATC (Hobo-Ac-Tam3) domain.

As to quaternary structure, homodimer.

It is found in the nucleus. Transposase-like protein that is essential for plant growth and development. May regulate global gene expression by recruiting other cellular factors. The polypeptide is Zinc finger BED domain-containing protein RICESLEEPER 1 (Oryza sativa subsp. japonica (Rice)).